A 517-amino-acid polypeptide reads, in one-letter code: Rop guanine nucleotide exchange factor 9 (517 aa).

Disordered regions lie at residues Asn-16–Glu-76 and Gly-428–His-517. The span at Met-39–Leu-63 shows a compositional bias: polar residues. Positions Ser-65–Glu-429 constitute a PRONE domain. Over residues Arg-66–Glu-76 the composition is skewed to basic and acidic residues. The segment covering Glu-440–Ser-452 has biased composition (polar residues).

In terms of assembly, interacts with ARAC11/ROP1 and ARAC10/ROP11. Interacts with PRK6. In terms of tissue distribution, expressed in pollen grains and pollen tubes.

The protein localises to the cell membrane. Guanine-nucleotide exchange factor (GEF) that acts as an activator of Rop (Rho of plants) GTPases by promoting the exchange of GDP for GTP. The chain is Rop guanine nucleotide exchange factor 9 from Arabidopsis thaliana (Mouse-ear cress).